A 402-amino-acid polypeptide reads, in one-letter code: Calcium-responsive transactivator (402 aa).

The tract at residues 1-148 is N-terminal auto-inhibitory domain; necessary for interaction with SMARCA4/BRG1; it reads MSVAFASARP…TLPTTSMSMS (148 aa). An SH2-binding motif is present at residues 50–53; sequence YQQI. 5 disordered regions span residues 72–129, 141–170, 195–250, 262–290, and 305–402; these read QSLL…GPNH, PTTSMSMSGSGHGSGPGYSHSGPASQSVPL, MHQQ…SSQQ, QYGHGQAASEPMSQQYYPDGHGDYAYQPA, and TQHY…NYQQ. Residues 92–106 show a composition bias toward low complexity; it reads QSGSAQGLHSQGSLS. The segment covering 117-129 has biased composition (polar residues); the sequence is SLMQAQIGNGPNH. The tract at residues 149–237 is methionine-rich intra-molecular domain; the sequence is GSGHGSGPGY…GGGVMGQRPM (89 aa). Low complexity predominate over residues 196-224; sequence HQQAASSHYSAAQGGSQHYQGQSMAMMGQ. The interval 251–323 is MFD domain; it reads YLGQEEYYGG…SQYSQQQTGY (73 aa). Composition is skewed to low complexity over residues 311–379 and 390–402; these read GGNS…RASQ and YGYEQGQYGNYQQ. The segment at 340–402 is necessary for nuclear localization; that stretch reads NQQSYPGQQQ…EQGQYGNYQQ (63 aa). Positions 359–362 match the SH2-binding motif; the sequence is SQYS. An SH3-binding motif is present at residues 377–385; sequence ASQTGPSTQ. A necessary for interaction with CREBBP and for the recruitment of CREBBP to the nuclear bodies region spans residues 393-402; the sequence is EQGQYGNYQQ. Positions 397 to 400 match the SH2-binding motif; sequence YGNY.

The protein belongs to the SS18 family. As to quaternary structure, homodimer. Dimerization may be necessary for its function in neuronal dendritic development. Interacts (via C-terminus) with CREBBP (via N-terminus), EP300 and SMARCA4/BRG1. Interacts with the nBAF complex. Association with CREBBP facilitates transcription while the association with SMARCA4/BRG1 suppresses CREST-mediated transcription in resting neurons.

The protein localises to the nucleus. It localises to the chromosome. Its subcellular location is the centromere. The protein resides in the kinetochore. Functionally, transcriptional activator which is required for calcium-dependent dendritic growth and branching in cortical neurons. Recruits CREB-binding protein (CREBBP) to nuclear bodies. Component of the CREST-BRG1 complex, a multiprotein complex that regulates promoter activation by orchestrating a calcium-dependent release of a repressor complex and a recruitment of an activator complex. In resting neurons, transcription of the c-FOS promoter is inhibited by BRG1-dependent recruitment of a phospho-RB1-HDAC1 repressor complex. Upon calcium influx, RB1 is dephosphorylated by calcineurin, which leads to release of the repressor complex. At the same time, there is increased recruitment of CREBBP to the promoter by a CREST-dependent mechanism, which leads to transcriptional activation. The CREST-BRG1 complex also binds to the NR2B promoter, and activity-dependent induction of NR2B expression involves a release of HDAC1 and recruitment of CREBBP. The sequence is that of Calcium-responsive transactivator (SS18L1) from Bos taurus (Bovine).